A 346-amino-acid chain; its full sequence is Low specificity L-threonine aldolase (346 aa).

At Lys-207 the chain carries N6-(pyridoxal phosphate)lysine.

Belongs to the threonine aldolase family. Homotetramer. Requires pyridoxal 5'-phosphate as cofactor.

It catalyses the reaction L-threonine = acetaldehyde + glycine. The catalysed reaction is L-allo-threonine = acetaldehyde + glycine. Functionally, catalyzes the cleavage of L-allo-threonine and L-threonine to glycine and acetaldehyde. This Pseudomonas aeruginosa (strain ATCC 15692 / DSM 22644 / CIP 104116 / JCM 14847 / LMG 12228 / 1C / PRS 101 / PAO1) protein is Low specificity L-threonine aldolase (ltaE).